Consider the following 244-residue polypeptide: Type III pantothenate kinase (244 aa).

9 to 16 (DAGNSSLK) contacts ATP. Substrate-binding positions include Tyr90 and 97 to 100 (GVDR). The active-site Proton acceptor is the Asp99. Thr122 serves as a coordination point for ATP. Residue Thr172 participates in substrate binding.

The protein belongs to the type III pantothenate kinase family. Homodimer. It depends on NH4(+) as a cofactor. K(+) serves as cofactor.

It is found in the cytoplasm. It catalyses the reaction (R)-pantothenate + ATP = (R)-4'-phosphopantothenate + ADP + H(+). Its pathway is cofactor biosynthesis; coenzyme A biosynthesis; CoA from (R)-pantothenate: step 1/5. In terms of biological role, catalyzes the phosphorylation of pantothenate (Pan), the first step in CoA biosynthesis. The protein is Type III pantothenate kinase of Thiobacillus denitrificans (strain ATCC 25259 / T1).